A 59-amino-acid chain; its full sequence is uncharacterized protein (59 aa).

The next 2 helical transmembrane spans lie at 1–21 (MNMYWFLGALLYFLIGTYIFI) and 30–50 (GSWILLALAAPLIIAGYPYFY).

The protein localises to the cell membrane. This is an uncharacterized protein from Bacillus subtilis (strain 168).